Consider the following 524-residue polypeptide: Putative mediator of RNA polymerase II transcription subunit 8 (524 aa).

Coiled-coil stretches lie at residues 117 to 146 (LKLH…SKHK) and 175 to 211 (NAQQ…QQQQ). 3 disordered regions span residues 312–340 (VASP…QPSI), 356–379 (LPNT…IGGG), and 430–451 (QQNQ…IQHL). Positions 314-333 (SPQQQVTSKQVPIQSTNKPL) are enriched in polar residues. The segment covering 356–374 (LPNTTSPPVNNNNQSPINS) has biased composition (low complexity). Positions 398–478 (IQQQIQLQQQ…LQQQFQQQQL (81 aa)) form a coiled coil.

The protein belongs to the Mediator complex subunit 8 family. As to quaternary structure, component of the Mediator complex. May be part of a multisubunit E3 ubiquitin-protein ligase complex.

The protein resides in the nucleus. Its pathway is protein modification; protein ubiquitination. Its function is as follows. Component of the Mediator complex, a coactivator involved in the regulated transcription of nearly all RNA polymerase II-dependent genes. Mediator functions as a bridge to convey information from gene-specific regulatory proteins to the basal RNA polymerase II transcription machinery. Mediator is recruited to promoters by direct interactions with regulatory proteins and serves as a scaffold for the assembly of a functional preinitiation complex with RNA polymerase II and the general transcription factors. May play a role as a target recruitment subunit in E3 ubiquitin-protein ligase complexes and thus in ubiquitination and subsequent proteasomal degradation of target proteins. This Dictyostelium discoideum (Social amoeba) protein is Putative mediator of RNA polymerase II transcription subunit 8 (med8).